Reading from the N-terminus, the 540-residue chain is Bifunctional purine biosynthesis protein PurH (540 aa).

The 144-residue stretch at 1-144 (MKRALISVYD…KNYQDVGVVV (144 aa)) folds into the MGS-like domain. Residues 204 to 224 (ETAPERPIGADPGPQKPAAPS) are disordered.

This sequence belongs to the PurH family.

The enzyme catalyses (6R)-10-formyltetrahydrofolate + 5-amino-1-(5-phospho-beta-D-ribosyl)imidazole-4-carboxamide = 5-formamido-1-(5-phospho-D-ribosyl)imidazole-4-carboxamide + (6S)-5,6,7,8-tetrahydrofolate. The catalysed reaction is IMP + H2O = 5-formamido-1-(5-phospho-D-ribosyl)imidazole-4-carboxamide. It participates in purine metabolism; IMP biosynthesis via de novo pathway; 5-formamido-1-(5-phospho-D-ribosyl)imidazole-4-carboxamide from 5-amino-1-(5-phospho-D-ribosyl)imidazole-4-carboxamide (10-formyl THF route): step 1/1. It functions in the pathway purine metabolism; IMP biosynthesis via de novo pathway; IMP from 5-formamido-1-(5-phospho-D-ribosyl)imidazole-4-carboxamide: step 1/1. This Symbiobacterium thermophilum (strain DSM 24528 / JCM 14929 / IAM 14863 / T) protein is Bifunctional purine biosynthesis protein PurH.